Consider the following 567-residue polypeptide: Protein NRT1/ PTR FAMILY 4.5 (567 aa).

The next 12 helical transmembrane spans lie at 30-50 (GMLA…AFLA), 70-92 (SSSE…GFLA), 99-118 (FVIF…LLTI), 147-167 (AFLF…KGSL), 189-209 (FFNY…TFVV), 219-239 (WGFG…LLGS), 326-346 (IVLK…CLAQ), 374-394 (VFPV…IIPF), 411-431 (IGVG…VELK), 448-468 (LPIT…ADLF), 491-511 (SLSW…VPIV), and 535-555 (LFYW…LFWA).

It belongs to the major facilitator superfamily. Proton-dependent oligopeptide transporter (POT/PTR) (TC 2.A.17) family. In terms of tissue distribution, expressed in flowers and siliques.

It localises to the membrane. Functionally, involved in abscisic acid transport. This Arabidopsis thaliana (Mouse-ear cress) protein is Protein NRT1/ PTR FAMILY 4.5 (NPF4.5).